The following is a 539-amino-acid chain: Probable protein kinase UbiB (539 aa).

The chain crosses the membrane as a helical span at residues 23–43 (DLLFALPLPWWMLAVRFVLPW). The 368-residue stretch at 125 to 492 (RFDETPLASA…WHDRKDEPVL (368 aa)) folds into the Protein kinase domain. ATP is bound by residues 131–139 (LASASVAQV) and lysine 153. Residue aspartate 288 is the Proton acceptor of the active site. 2 helical membrane passes run 494–514 (LIGA…SEAA) and 517–537 (LLTL…YLIV).

Belongs to the ABC1 family. UbiB subfamily.

It localises to the cell inner membrane. Its pathway is cofactor biosynthesis; ubiquinone biosynthesis [regulation]. In terms of biological role, is probably a protein kinase regulator of UbiI activity which is involved in aerobic coenzyme Q (ubiquinone) biosynthesis. The chain is Probable protein kinase UbiB from Pseudomonas syringae pv. tomato (strain ATCC BAA-871 / DC3000).